A 440-amino-acid chain; its full sequence is Chromosome partition protein MukF (440 aa).

Residues Leu-208–Ile-236 form a leucine-zipper region.

This sequence belongs to the MukF family. As to quaternary structure, interacts, and probably forms a ternary complex, with MukE and MukB via its C-terminal region. The complex formation is stimulated by calcium or magnesium. It is required for an interaction between MukE and MukB.

It is found in the cytoplasm. It localises to the nucleoid. Functionally, involved in chromosome condensation, segregation and cell cycle progression. May participate in facilitating chromosome segregation by condensation DNA from both sides of a centrally located replisome during cell division. Not required for mini-F plasmid partitioning. Probably acts via its interaction with MukB and MukE. Overexpression results in anucleate cells. It has a calcium binding activity. This Salmonella gallinarum (strain 287/91 / NCTC 13346) protein is Chromosome partition protein MukF.